Reading from the N-terminus, the 289-residue chain is MAIAKEFLLTVLNYIANGVVNVQSSTTQAVTTLAPYQIIAIMKNNNVTVSRTTITSISVSDVVNASQEETLTIRYSGTDASPFTYTTDEIEIWASTQSALLYKIADIQLQTPLSKTEHDYLNIEYEIIITAGASYTTTSSMSQYTSVVTFRTLVAPILYFFALFLVPAWSTVLKQNPTFPQSQLSNYISPSSYQGINAMYVGSNQVTIVSKLVGFGTTTVSIVVNGEVTSTQVNAPIFIGVTTPSGVLVLAYNYYSGTISKYVSLTVTTTYGSATVINQFETKTTGGTT.

The Extracellular portion of the chain corresponds to 1–152 (MAIAKEFLLT…QYTSVVTFRT (152 aa)). The chain crosses the membrane as a helical span at residues 153-173 (LVAPILYFFALFLVPAWSTVL). The Cytoplasmic portion of the chain corresponds to 174–234 (KQNPTFPQSQ…NGEVTSTQVN (61 aa)). Residues 235–255 (APIFIGVTTPSGVLVLAYNYY) traverse the membrane as a helical segment. The Extracellular portion of the chain corresponds to 256-289 (SGTISKYVSLTVTTTYGSATVINQFETKTTGGTT).

It localises to the host membrane. This Acidianus sp. F28 (AFV-2) protein is Putative transmembrane protein ORF289.